Reading from the N-terminus, the 38-residue chain is MFKQPGHLTSRKYDLGPWTNVFNLCFLASEAAVGCNKS.

This is an uncharacterized protein from Saccharomyces cerevisiae (strain ATCC 204508 / S288c) (Baker's yeast).